The primary structure comprises 185 residues: Translocon-associated protein subunit gamma (185 aa).

An N-acetylmethionine modification is found at Met1. At 1–27 the chain is on the lumenal side; sequence MAPKGGSKQQSEEDLLLQDFSRNLSAK. Residues Ser7 and Ser11 each carry the phosphoserine modification. A helical transmembrane segment spans residues 28-48; it reads SSALFFGNAFIVSAIPIWLYW. Residues 49-54 are Cytoplasmic-facing; sequence RIWHMD. The chain crosses the membrane as a helical span at residues 55-76; it reads LIQSAVLYSVMTLVSTYLVAFA. The Lumenal portion of the chain corresponds to 77-135; sequence YKNVKFVLKHKVAQKREDAVSKEVTRKLSEADNRKMSRKEKDERILWKKNEVADYEATT. Ser105 is subject to Phosphoserine. The chain crosses the membrane as a helical span at residues 136-157; it reads FSIFYNNTLFLVLVIVASFFIL. Topologically, residues 158 to 163 are cytoplasmic; that stretch reads KNFNPT. Residues 164-184 form a helical membrane-spanning segment; it reads VNYILSISASSGLIALLSTGS.

This sequence belongs to the TRAP-gamma family. In terms of assembly, heterotetramer of TRAP-alpha, TRAP-beta, TRAP-delta and TRAP-gamma.

It localises to the endoplasmic reticulum membrane. Its function is as follows. TRAP proteins are part of a complex whose function is to bind calcium to the ER membrane and thereby regulate the retention of ER resident proteins. This chain is Translocon-associated protein subunit gamma (Ssr3), found in Mus musculus (Mouse).